The chain runs to 364 residues: tRNA/tmRNA (uracil-C(5))-methyltransferase (364 aa).

S-adenosyl-L-methionine-binding residues include Gln188, Tyr216, Asn221, Glu237, and Asp297. The Nucleophile role is filled by Cys322. Glu356 functions as the Proton acceptor in the catalytic mechanism.

The protein belongs to the class I-like SAM-binding methyltransferase superfamily. RNA M5U methyltransferase family. TrmA subfamily.

The catalysed reaction is uridine(54) in tRNA + S-adenosyl-L-methionine = 5-methyluridine(54) in tRNA + S-adenosyl-L-homocysteine + H(+). The enzyme catalyses uridine(341) in tmRNA + S-adenosyl-L-methionine = 5-methyluridine(341) in tmRNA + S-adenosyl-L-homocysteine + H(+). Functionally, dual-specificity methyltransferase that catalyzes the formation of 5-methyluridine at position 54 (m5U54) in all tRNAs, and that of position 341 (m5U341) in tmRNA (transfer-mRNA). In Mannheimia succiniciproducens (strain KCTC 0769BP / MBEL55E), this protein is tRNA/tmRNA (uracil-C(5))-methyltransferase.